The chain runs to 156 residues: Transcription elongation factor GreA (156 aa).

Residues 1 to 84 (MAKYTISKHR…IEDVMRSTDE (84 aa)) are a coiled coil.

This sequence belongs to the GreA/GreB family.

In terms of biological role, necessary for efficient RNA polymerase transcription elongation past template-encoded arresting sites. The arresting sites in DNA have the property of trapping a certain fraction of elongating RNA polymerases that pass through, resulting in locked ternary complexes. Cleavage of the nascent transcript by cleavage factors such as GreA or GreB allows the resumption of elongation from the new 3'terminus. GreA releases sequences of 2 to 3 nucleotides. The protein is Transcription elongation factor GreA of Ureaplasma urealyticum serovar 10 (strain ATCC 33699 / Western).